A 103-amino-acid polypeptide reads, in one-letter code: Co-chaperonin GroES (103 aa).

The protein belongs to the GroES chaperonin family. As to quaternary structure, heptamer of 7 subunits arranged in a ring. Interacts with the chaperonin GroEL.

It localises to the cytoplasm. Functionally, together with the chaperonin GroEL, plays an essential role in assisting protein folding. The GroEL-GroES system forms a nano-cage that allows encapsulation of the non-native substrate proteins and provides a physical environment optimized to promote and accelerate protein folding. GroES binds to the apical surface of the GroEL ring, thereby capping the opening of the GroEL channel. In Nostoc sp. (strain PCC 7120 / SAG 25.82 / UTEX 2576), this protein is Co-chaperonin GroES.